Reading from the N-terminus, the 298-residue chain is Junctional adhesion molecule B (298 aa).

Residues 1–28 (MARSPQGLLMLLLLHYLIVALDYHKANG) form the signal peptide. Topologically, residues 29–236 (FSASKDHRQE…GKRMQVDVLN (208 aa)) are extracellular. Residues 32-128 (SKDHRQEVTV…GQNLQEDKVM (97 aa)) form the Ig-like V-type domain. Intrachain disulfides connect Cys-51/Cys-110 and Cys-156/Cys-214. Residue Asn-99 is glycosylated (N-linked (GlcNAc...) asparagine). The Ig-like C2-type domain occupies 135 to 238 (PAVPACEVPT…RMQVDVLNIS (104 aa)). A helical membrane pass occupies residues 237-257 (ISGIIATVVVVAFVISVCGLG). Topologically, residues 258–298 (TCYAQRKGYFSKETSFQKGSPASKVTTMSENDFKHTKSFII) are cytoplasmic.

Belongs to the immunoglobulin superfamily. In terms of processing, the expression in Sertoli cells is regulated by TGFB3 through ubiquitin-mediated proteasomal degradation. In terms of tissue distribution, expressed by bone marrow stromal cells (at protein level). Expressed in skin (at protein level). Expressed in testis by Sertoli cells (at protein level). Expressed by dorsal root ganglion and spinal cord neurons.

The protein localises to the cell membrane. It is found in the cell junction. It localises to the tight junction. In terms of biological role, junctional adhesion protein that mediates heterotypic cell-cell interactions with its cognate receptor JAM3 to regulate different cellular processes. Plays a role in homing and mobilization of hematopoietic stem and progenitor cells within the bone marrow. At the surface of bone marrow stromal cells, it contributes to the retention of the hematopoietic stem and progenitor cells expressing JAM3. Plays a central role in leukocytes extravasation by facilitating not only transmigration but also tethering and rolling of leukocytes along the endothelium. Tethering and rolling of leukocytes are dependent on the binding by JAM2 of the integrin alpha-4/beta-1. Plays a role in spermatogenesis where JAM2 and JAM3, which are respectively expressed by Sertoli and germ cells, mediate an interaction between both cell types and play an essential role in the anchorage of germ cells onto Sertoli cells and the assembly of cell polarity complexes during spermatid differentiation. Also functions as an inhibitory somatodendritic cue that prevents the myelination of non-axonal parts of neurons. During myogenesis, it is involved in myocyte fusion. May also play a role in angiogenesis. This Mus musculus (Mouse) protein is Junctional adhesion molecule B.